Consider the following 146-residue polypeptide: Stress enhanced protein 1, chloroplastic (146 aa).

Residues 1-73 constitute a chloroplast transit peptide; it reads MALSQVSASL…GNRAASVSIR (73 aa). A run of 2 helical transmembrane segments spans residues 84–104 and 120–140; these read LDIW…TVEI and LPTV…VFIF.

Belongs to the ELIP/psbS family.

It localises to the plastid. Its subcellular location is the chloroplast thylakoid membrane. Its function is as follows. May be involved in non-photochemical quenching, a process that maintains the balance between dissipation and utilization of light energy to minimize generation of oxidizing molecules, thereby protecting the plant against photo-oxidative damage. May play a photoprotective role in the thylakoid membrane in response to light stress. The chain is Stress enhanced protein 1, chloroplastic from Arabidopsis thaliana (Mouse-ear cress).